The primary structure comprises 30 residues: Cyclotide hyen-D (30 aa).

Positions 1 to 30 form a cross-link, cyclopeptide (Gly-Asn); the sequence is GFPCGESCVYIPCFTAAIGCSCKSKVCYKN. 3 cysteine pairs are disulfide-bonded: cysteine 4-cysteine 20, cysteine 8-cysteine 22, and cysteine 13-cysteine 27.

Post-translationally, this is a cyclic peptide. Detected in stems (at protein level).

Its function is as follows. Probably participates in a plant defense mechanism. Has strong cytotoxic activity against HUVEC cells (LC(50)= 0.58 uM) and various cancer cells including HeLa (LC(50)= 0.48 uM), MCF-7 and K562. Also displays some hemolytic activity. Binds to and induces leakage in phospholipd membranes, particularly ones containing 1-palmitoyl-2-oleophosphatidylethanolamine (POPE). In Pigea enneasperma (Spade flower), this protein is Cyclotide hyen-D.